Reading from the N-terminus, the 172-residue chain is 3-hydroxydecanoyl-[acyl-carrier-protein] dehydratase (172 aa).

His-71 is an active-site residue.

This sequence belongs to the thioester dehydratase family. FabA subfamily. Homodimer.

It localises to the cytoplasm. The enzyme catalyses a (3R)-hydroxyacyl-[ACP] = a (2E)-enoyl-[ACP] + H2O. It catalyses the reaction (3R)-hydroxydecanoyl-[ACP] = (2E)-decenoyl-[ACP] + H2O. It carries out the reaction (2E)-decenoyl-[ACP] = (3Z)-decenoyl-[ACP]. It participates in lipid metabolism; fatty acid biosynthesis. Necessary for the introduction of cis unsaturation into fatty acids. Catalyzes the dehydration of (3R)-3-hydroxydecanoyl-ACP to E-(2)-decenoyl-ACP and then its isomerization to Z-(3)-decenoyl-ACP. Can catalyze the dehydratase reaction for beta-hydroxyacyl-ACPs with saturated chain lengths up to 16:0, being most active on intermediate chain length. This chain is 3-hydroxydecanoyl-[acyl-carrier-protein] dehydratase, found in Klebsiella pneumoniae (strain 342).